The chain runs to 451 residues: Phosphoglucosamine mutase (451 aa).

The active-site Phosphoserine intermediate is the serine 103. The Mg(2+) site is built by serine 103, aspartate 243, aspartate 245, and aspartate 247. At serine 103 the chain carries Phosphoserine.

This sequence belongs to the phosphohexose mutase family. Mg(2+) serves as cofactor. Activated by phosphorylation.

It catalyses the reaction alpha-D-glucosamine 1-phosphate = D-glucosamine 6-phosphate. Functionally, catalyzes the conversion of glucosamine-6-phosphate to glucosamine-1-phosphate. The chain is Phosphoglucosamine mutase from Lactobacillus gasseri (strain ATCC 33323 / DSM 20243 / BCRC 14619 / CIP 102991 / JCM 1131 / KCTC 3163 / NCIMB 11718 / NCTC 13722 / AM63).